We begin with the raw amino-acid sequence, 32 residues long: Trypsin inhibitor 2b (32 aa).

Cystine bridges form between C3–C20, C10–C22, and C16–C29.

Belongs to the protease inhibitor I7 (squash-type serine protease inhibitor) family.

It localises to the secreted. Inhibits trypsin. The chain is Trypsin inhibitor 2b from Cucumis sativus (Cucumber).